Consider the following 1062-residue polypeptide: Platelet-derived growth factor receptor alpha (1062 aa).

A signal peptide spans 1–27 (MFPPSSAPLLLPQLEELVVPLHTAFTL). 5 consecutive Ig-like C2-type domains span residues 28–96 (TCQG…VYVP), 91–184 (IYVY…VHGW), 190–281 (LHVE…KQIA), 287–381 (SEFM…RTVS), and 389–493 (PAVI…IKLV). At 28-504 (TCQGEATIAW…NGPHPELTVA (477 aa)) the chain is on the extracellular side. Residues cysteine 29 and cysteine 74 are joined by a disulfide bond. N-linked (GlcNAc...) asparagine glycosylation is found at asparagine 79 and asparagine 132. Cystine bridges form between cysteine 124–cysteine 165 and cysteine 211–cysteine 265. Residues asparagine 273, asparagine 333, asparagine 366, asparagine 433, and asparagine 444 are each glycosylated (N-linked (GlcNAc...) asparagine). Cysteine 410 and cysteine 477 are oxidised to a cystine. Residues 505–525 (AAVLVLLVIVIISLIVLVVIW) form a helical membrane-spanning segment. Topologically, residues 526 to 1062 (KQKPRYEIRW…CSDLVEDSFL (537 aa)) are cytoplasmic. Phosphotyrosine; by autocatalysis is present on residues tyrosine 548 and tyrosine 550. One can recognise a Protein kinase domain in the interval 569 to 945 (LVLGRILGSG…HYERVNHEFL (377 aa)). ATP is bound by residues 575–583 (LGSGAFGKV) and lysine 603. Tyrosine 697, tyrosine 708, tyrosine 719, tyrosine 731, and tyrosine 739 each carry phosphotyrosine; by autocatalysis. The tract at residues 734–754 (LQGSNYDHPPSQKGSNDGEMD) is disordered. Aspartate 793 acts as the Proton acceptor in catalysis. Residues tyrosine 824 and tyrosine 963 each carry the phosphotyrosine; by autocatalysis modification. Positions 975–986 (KDRESGFDEQRL) are enriched in basic and acidic residues. The disordered stretch occupies residues 975–1034 (KDRESGFDEQRLSSDSGYIIPLPDLDPISDEEYGKRNRHSSQTSEESAIETGSSSSTFAK). Tyrosine 992 bears the Phosphotyrosine; by autocatalysis mark. Over residues 1014–1032 (SSQTSEESAIETGSSSSTF) the composition is skewed to polar residues.

The protein belongs to the protein kinase superfamily. Tyr protein kinase family. CSF-1/PDGF receptor subfamily. Interacts with homodimeric pdgfa, pdgfb and pdgfc, and with heterodimers formed by pdgfa and pdgfb. monomer in the absence of bound ligand. Interaction with dimeric pdgfa, pdgfb and/or pdgfc leads to receptor dimerization, where both pdgfra homodimers and heterodimers with pdgfrb are observed. Post-translationally, ubiquitinated, leading to its degradation. Autophosphorylated on tyrosine residues upon ligand binding. Autophosphorylation occurs in trans, i.e. one subunit of the dimeric receptor phosphorylates tyrosine residues on the other subunit.

Its subcellular location is the cell membrane. It catalyses the reaction L-tyrosyl-[protein] + ATP = O-phospho-L-tyrosyl-[protein] + ADP + H(+). With respect to regulation, present in an inactive conformation in the absence of bound ligand. Binding of pdgfa and/or pdgfb leads to dimerization and activation by autophosphorylation on tyrosine residues. Functionally, tyrosine-protein kinase that acts as a cell-surface receptor for pdgfa, pdgfb and pdgfc and plays an essential role in the regulation of embryonic development, cell proliferation, survival and chemotaxis. Depending on the context, promotes or inhibits cell proliferation and cell migration. Plays an important role in the differentiation of bone marrow-derived mesenchymal stem cells. Required for normal skeleton development. Required for normal development of the gastrointestinal tract. Plays a role in cell migration and chemotaxis in wound healing. Plays a role in platelet activation, secretion of agonists from platelet granules, and in thrombin-induced platelet aggregation. Binding of its cognate ligands - homodimeric pdgfa, homodimeric pdgfb, heterodimers formed by pdgfa and pdgfb or homodimeric pdgfc -leads to the activation of several signaling cascades; the response depends on the nature of the bound ligand and is modulated by the formation of heterodimers between pdgfra and pdgfrb. Phosphorylates pik3r1, plcg1, and ptpn11. Activation of plcg1 leads to the production of the cellular signaling molecules diacylglycerol and inositol 1,4,5-trisphosphate, mobilization of cytosolic Ca(2+) and the activation of protein kinase C. Phosphorylates pik3r1, the regulatory subunit of phosphatidylinositol 3-kinase, and thereby mediates activation of the AKT1 signaling pathway. Mediates activation of hras and of the MAP kinases mapk1/erk2 and/or mapk3/erk1. Promotes activation of STAT family members stat1, stat3 and stat5a and/or stat5b. Receptor signaling is down-regulated by protein phosphatases that dephosphorylate the receptor and its down-stream effectors, and by rapid internalization of the activated receptor. The sequence is that of Platelet-derived growth factor receptor alpha (pdgfra) from Takifugu rubripes (Japanese pufferfish).